Here is a 721-residue protein sequence, read N- to C-terminus: Polyribonucleotide nucleotidyltransferase (721 aa).

2 residues coordinate Mg(2+): Asp495 and Asp501. Residues Pro562–Ile621 form the KH domain. The S1 motif domain maps to Gly631–Lys699. Residues Lys699–Lys721 are disordered.

The protein belongs to the polyribonucleotide nucleotidyltransferase family. Requires Mg(2+) as cofactor.

Its subcellular location is the cytoplasm. It carries out the reaction RNA(n+1) + phosphate = RNA(n) + a ribonucleoside 5'-diphosphate. Involved in mRNA degradation. Catalyzes the phosphorolysis of single-stranded polyribonucleotides processively in the 3'- to 5'-direction. The chain is Polyribonucleotide nucleotidyltransferase from Anaeromyxobacter dehalogenans (strain 2CP-1 / ATCC BAA-258).